The following is a 62-amino-acid chain: Small ribosomal subunit protein bS21 (62 aa).

Residues 38-62 are disordered; that stretch reads YEKPSERRKRKMNAAVRKNRRTRHG.

This sequence belongs to the bacterial ribosomal protein bS21 family.

The protein is Small ribosomal subunit protein bS21 of Gemmatimonas aurantiaca (strain DSM 14586 / JCM 11422 / NBRC 100505 / T-27).